Consider the following 837-residue polypeptide: Ribosome biogenesis ATPase RIX7 (837 aa).

2 disordered regions span residues 36–56 (RSLR…EEDE) and 149–207 (ITST…LKSL). A Phosphoserine modification is found at Ser42. Residues 43-56 (QGEEGENNEGEEDE) show a composition bias toward acidic residues. Residues 149 to 163 (ITSTWSKSGSVSESI) show a composition bias toward polar residues. The segment covering 176 to 192 (KSKKRSKEGTCKVKRQK) has biased composition (basic residues). ATP is bound at residue 246-253 (GPPGCGKT). A disordered region spans residues 443–468 (PTTATDSSEDNMEIDETANGDESSLK). Positions 449–461 (SSEDNMEIDETAN) are enriched in acidic residues. 574 to 581 (GPPGCGKT) is an ATP binding site.

This sequence belongs to the AAA ATPase family.

The protein resides in the nucleus. It localises to the nucleolus. In terms of biological role, involved in ribosome biogenesis. Seems to be required for restructuring nucleoplasmic 60S pre-ribosomal particles to make them competent for nuclear export. This chain is Ribosome biogenesis ATPase RIX7 (RIX7), found in Saccharomyces cerevisiae (strain ATCC 204508 / S288c) (Baker's yeast).